A 238-amino-acid chain; its full sequence is Probable transcriptional regulatory protein VPA0011 (238 aa).

The protein belongs to the TACO1 family.

It is found in the cytoplasm. In Vibrio parahaemolyticus serotype O3:K6 (strain RIMD 2210633), this protein is Probable transcriptional regulatory protein VPA0011.